The following is a 251-amino-acid chain: CDP-diacylglycerol pyrophosphatase (251 aa).

Residues 5 to 25 (GYFLLAVIVIVAAAGVGYWKF) traverse the membrane as a helical segment.

It belongs to the Cdh family.

The protein localises to the cell inner membrane. It carries out the reaction a CDP-1,2-diacyl-sn-glycerol + H2O = a 1,2-diacyl-sn-glycero-3-phosphate + CMP + 2 H(+). It participates in phospholipid metabolism; CDP-diacylglycerol degradation; phosphatidate from CDP-diacylglycerol: step 1/1. In Salmonella typhi, this protein is CDP-diacylglycerol pyrophosphatase.